We begin with the raw amino-acid sequence, 774 residues long: Lon protease 1 (774 aa).

Positions 9 to 202 constitute a Lon N-terminal domain; the sequence is IPLLPLRGLL…KVIDFINNEK (194 aa). 354–361 is a binding site for ATP; that stretch reads GPPGVGKT. The Lon proteolytic domain maps to 590–771; it reads EDQVGVVTGL…DEVLEHALVG (182 aa). Catalysis depends on residues serine 677 and lysine 720.

The protein belongs to the peptidase S16 family. As to quaternary structure, homohexamer. Organized in a ring with a central cavity. Exists as a mixture of small oligomeric species in solution.

The protein localises to the cytoplasm. The enzyme catalyses Hydrolysis of proteins in presence of ATP.. Functionally, ATP-dependent serine protease that mediates the selective degradation of mutant and abnormal proteins as well as certain short-lived regulatory proteins. Required for cellular homeostasis and for survival from DNA damage and developmental changes induced by stress. Degrades polypeptides processively to yield small peptide fragments that are 5 to 10 amino acids long. Binds to DNA in a double-stranded, site-specific manner. Has been implicated in preventing sigma(G) activity under non-sporulation conditions. This is Lon protease 1 from Bacillus subtilis (strain 168).